Reading from the N-terminus, the 379-residue chain is Alcohol dehydrogenase class-3 (379 aa).

7 residues coordinate Zn(2+): cysteine 47, histidine 69, cysteine 99, cysteine 102, cysteine 105, cysteine 113, and cysteine 176.

This sequence belongs to the zinc-containing alcohol dehydrogenase family. Class-III subfamily. Homodimer. Zn(2+) serves as cofactor.

The protein localises to the cytoplasm. The enzyme catalyses a primary alcohol + NAD(+) = an aldehyde + NADH + H(+). It carries out the reaction a secondary alcohol + NAD(+) = a ketone + NADH + H(+). The catalysed reaction is S-(hydroxymethyl)glutathione + NADP(+) = S-formylglutathione + NADPH + H(+). It catalyses the reaction S-(hydroxymethyl)glutathione + NAD(+) = S-formylglutathione + NADH + H(+). In terms of biological role, class-III ADH is remarkably ineffective in oxidizing ethanol, but it readily catalyzes the oxidation of long-chain primary alcohols and the oxidation of S-(hydroxymethyl) glutathione. This Dictyostelium discoideum (Social amoeba) protein is Alcohol dehydrogenase class-3 (adh5).